Reading from the N-terminus, the 88-residue chain is Small ribosomal subunit protein bS16 (88 aa).

This sequence belongs to the bacterial ribosomal protein bS16 family.

This chain is Small ribosomal subunit protein bS16, found in Halothermothrix orenii (strain H 168 / OCM 544 / DSM 9562).